The chain runs to 406 residues: uncharacterized protein (406 aa).

This sequence belongs to the glycosyltransferase group 1 family. Glycosyltransferase 4 subfamily.

This is an uncharacterized protein from Methanocaldococcus jannaschii (strain ATCC 43067 / DSM 2661 / JAL-1 / JCM 10045 / NBRC 100440) (Methanococcus jannaschii).